The following is a 180-amino-acid chain: Probable DNA-directed RNA polymerase subunit delta (180 aa).

The HTH HARE-type domain occupies 14–81 (LSMIEVARAI…GHNVWALRSW (68 aa)). A disordered region spans residues 89 to 180 (EEVNHPEDEE…HQDDLDDDDE (92 aa)). Positions 115–163 (DSDDDDIIDYDSDDPEDEDLDVDEEDTNEDDYSDDDLDDADDNELDDGI) are enriched in acidic residues.

The protein belongs to the RpoE family. RNAP is composed of a core of 2 alpha, a beta and a beta' subunits. The core is associated with a delta subunit and one of several sigma factors.

Its function is as follows. Participates in both the initiation and recycling phases of transcription. In the presence of the delta subunit, RNAP displays an increased specificity of transcription, a decreased affinity for nucleic acids, and an increased efficiency of RNA synthesis because of enhanced recycling. The polypeptide is Probable DNA-directed RNA polymerase subunit delta (Lactobacillus johnsonii (strain CNCM I-12250 / La1 / NCC 533)).